The following is a 194-amino-acid chain: MISRLTGKLVEKNPPQIVIDVNGVGYEADVSMQTFYNLPPVGESVQLFTQLIIREDAHLLFGFATAEERKTFRQLIKVGGIGAKTALGILSAMTADELAQAVAEEDVKRLSSAPGIGKKTAERMVLELRGKLVAHAVTDGLFAAAPAADETEDIVGTLLALGYSEREAKAAVKGVPEGTDVGEGVRLALKNLLK.

The domain I stretch occupies residues 1–64 (MISRLTGKLV…EDAHLLFGFA (64 aa)). Positions 65–143 (TAEERKTFRQ…AHAVTDGLFA (79 aa)) are domain II. Positions 144–147 (AAPA) are flexible linker. The tract at residues 147–194 (AADETEDIVGTLLALGYSEREAKAAVKGVPEGTDVGEGVRLALKNLLK) is domain III.

This sequence belongs to the RuvA family. In terms of assembly, homotetramer. Forms an RuvA(8)-RuvB(12)-Holliday junction (HJ) complex. HJ DNA is sandwiched between 2 RuvA tetramers; dsDNA enters through RuvA and exits via RuvB. An RuvB hexamer assembles on each DNA strand where it exits the tetramer. Each RuvB hexamer is contacted by two RuvA subunits (via domain III) on 2 adjacent RuvB subunits; this complex drives branch migration. In the full resolvosome a probable DNA-RuvA(4)-RuvB(12)-RuvC(2) complex forms which resolves the HJ.

It localises to the cytoplasm. Its function is as follows. The RuvA-RuvB-RuvC complex processes Holliday junction (HJ) DNA during genetic recombination and DNA repair, while the RuvA-RuvB complex plays an important role in the rescue of blocked DNA replication forks via replication fork reversal (RFR). RuvA specifically binds to HJ cruciform DNA, conferring on it an open structure. The RuvB hexamer acts as an ATP-dependent pump, pulling dsDNA into and through the RuvAB complex. HJ branch migration allows RuvC to scan DNA until it finds its consensus sequence, where it cleaves and resolves the cruciform DNA. The protein is Holliday junction branch migration complex subunit RuvA of Neisseria meningitidis serogroup A / serotype 4A (strain DSM 15465 / Z2491).